We begin with the raw amino-acid sequence, 345 residues long: NADH-ubiquinone oxidoreductase chain 2 (345 aa).

A run of 10 helical transmembrane segments spans residues 1–21 (MNPI…ILTM), 25–45 (HWVS…PIIS), 59–79 (YFLI…TNAY), 96–116 (IMLS…FWLP), 123–143 (PMIT…ALLI), 148–168 (LIPP…GGLG), 191–211 (ITIT…YILL), 240–260 (TASL…LSGF), 274–294 (HLTP…MFYL), and 324–344 (SLLS…PLMI).

The protein belongs to the complex I subunit 2 family.

It is found in the mitochondrion inner membrane. It carries out the reaction a ubiquinone + NADH + 5 H(+)(in) = a ubiquinol + NAD(+) + 4 H(+)(out). Its function is as follows. Core subunit of the mitochondrial membrane respiratory chain NADH dehydrogenase (Complex I) that is believed to belong to the minimal assembly required for catalysis. Complex I functions in the transfer of electrons from NADH to the respiratory chain. The immediate electron acceptor for the enzyme is believed to be ubiquinone. The protein is NADH-ubiquinone oxidoreductase chain 2 (MT-ND2) of Varanus timorensis (Timor monitor).